We begin with the raw amino-acid sequence, 149 residues long: Arginine repressor (149 aa).

The protein belongs to the ArgR family.

It is found in the cytoplasm. The protein operates within amino-acid biosynthesis; L-arginine biosynthesis [regulation]. Its function is as follows. Regulates arginine biosynthesis genes. The chain is Arginine repressor from Listeria welshimeri serovar 6b (strain ATCC 35897 / DSM 20650 / CCUG 15529 / CIP 8149 / NCTC 11857 / SLCC 5334 / V8).